Consider the following 462-residue polypeptide: NEDD8-activating enzyme E1 catalytic subunit (462 aa).

The residue at position 2 (alanine 2) is an N-acetylalanine. The interaction with UBE2M N-terminus stretch occupies residues 53–70; that stretch reads HPDFEPSTESLQFLLDTC. ATP-binding positions include 100–124 and 148–171; these read DMDT…GRPK and IQDF…SIIA. Interaction with UBE2M N-terminus regions lie at residues 157-161 and 192-217; these read RQFHI and PSSI…LPGM. Positions 227 to 229 are interaction with NEDD8; that stretch reads LYP. The active-site Glycyl thioester intermediate is cysteine 237. 2 interaction with NAE1 regions span residues 242–248 and 292–295; these read MPRLPEH and YNIR. Positions 331-338 are interaction with UBE2M N-terminus; that stretch reads IATSAYIP. The interval 352 to 357 is interaction with NEDD8; the sequence is YTYTFE. The interval 368-462 is interaction with UBE2M core domain; it reads SQLPQNIQFS…QTVLFKLHFT (95 aa).

The protein belongs to the ubiquitin-activating E1 family. UBA3 subfamily. In terms of assembly, heterodimer of UBA3 and NAE1. Interacts with NEDD8, UBE2F and UBE2M. Binds ESR1 and ESR2 with bound steroid ligand. Interacts with TBATA.

It carries out the reaction ATP + [NEDD8 protein] + [E1 NEDD8-activating enzyme]-L-cysteine = AMP + diphosphate + [E1 NEDD8-activating enzyme]-S-[NEDD8 protein]-yl-L-cysteine.. It functions in the pathway protein modification; protein neddylation. Its activity is regulated as follows. Binding of TP53BP2 to the regulatory subunit NAE1 decreases activity. In terms of biological role, catalytic subunit of the dimeric UBA3-NAE1 E1 enzyme. E1 activates NEDD8 by first adenylating its C-terminal glycine residue with ATP, thereafter linking this residue to the side chain of the catalytic cysteine, yielding a NEDD8-UBA3 thioester and free AMP. E1 finally transfers NEDD8 to the catalytic cysteine of UBE2M. Down-regulates steroid receptor activity. Necessary for cell cycle progression. The protein is NEDD8-activating enzyme E1 catalytic subunit (Uba3) of Mus musculus (Mouse).